We begin with the raw amino-acid sequence, 609 residues long: Glutamine--fructose-6-phosphate aminotransferase [isomerizing] (609 aa).

Cys-2 serves as the catalytic Nucleophile; for GATase activity. The region spanning 2–219 is the Glutamine amidotransferase type-2 domain; it reads CGIFGYIGAK…SGELAVVGLG (218 aa). SIS domains lie at 280 to 426 and 458 to 599; these read ISEK…LKQT and WAND…IDRP. The active-site For Fru-6P isomerization activity is the Lys-604.

In terms of assembly, homodimer.

It is found in the cytoplasm. It carries out the reaction D-fructose 6-phosphate + L-glutamine = D-glucosamine 6-phosphate + L-glutamate. Functionally, catalyzes the first step in hexosamine metabolism, converting fructose-6P into glucosamine-6P using glutamine as a nitrogen source. This Chlamydia caviae (strain ATCC VR-813 / DSM 19441 / 03DC25 / GPIC) (Chlamydophila caviae) protein is Glutamine--fructose-6-phosphate aminotransferase [isomerizing].